The chain runs to 602 residues: Glutamyl-tRNA(Gln) amidotransferase subunit B, mitochondrial (602 aa).

Residues methionine 1–serine 52 constitute a mitochondrion transit peptide. The segment at glutamine 61 to serine 83 is disordered.

This sequence belongs to the GatB/GatE family. GatB subfamily. As to quaternary structure, subunit of the heterotrimeric GatCAB amidotransferase (AdT) complex, composed of A, B and C subunits.

Its subcellular location is the mitochondrion. The enzyme catalyses L-glutamyl-tRNA(Gln) + L-glutamine + ATP + H2O = L-glutaminyl-tRNA(Gln) + L-glutamate + ADP + phosphate + H(+). Functionally, allows the formation of correctly charged Gln-tRNA(Gln) through the transamidation of misacylated Glu-tRNA(Gln) in the mitochondria. The reaction takes place in the presence of glutamine and ATP through an activated gamma-phospho-Glu-tRNA(Gln). This is Glutamyl-tRNA(Gln) amidotransferase subunit B, mitochondrial from Aspergillus clavatus (strain ATCC 1007 / CBS 513.65 / DSM 816 / NCTC 3887 / NRRL 1 / QM 1276 / 107).